The primary structure comprises 610 residues: C4b-binding protein alpha chain (610 aa).

Residues 1 to 48 (MKHQRVPVMILHSKGTMASWPFSRLWSISDPILFQVTLVATLLATVLG) form the signal peptide. Sushi domains are found at residues 49–109 (SCGI…FCVK), 110–171 (KRCE…QCII), 172–236 (AKCE…SCKK), 237–296 (VICV…TCEL), 297–364 (NGCL…ECKE), 365–427 (VCCP…ECRP), 428–485 (DCKS…QCKA), and 486–543 (LCLK…KCEW). 16 disulfides stabilise this stretch: C50–C95, C80–C107, C112–C153, C139–C169, C174–C217, C203–C234, C239–C281, C267–C294, C299–C350, C334–C362, C367–C412, C402–C425, C429–C471, C457–C483, C487–C528, and C514–C541. N66 carries an N-linked (GlcNAc...) asparagine glycan. A glycan (N-linked (GlcNAc...) asparagine) is linked at N221. N-linked (GlcNAc...) asparagine glycans are attached at residues N525 and N602.

As to quaternary structure, disulfide-linked complex of alpha and beta chains.

Its subcellular location is the secreted. Its function is as follows. Controls the classical pathway of complement activation. It binds as a cofactor to C3b/C4b inactivator (C3bINA), which then hydrolyzes the complement fragment C4b. It also accelerates the degradation of the C4bC2a complex (C3 convertase) by dissociating the complement fragment C2a. Alpha chain binds C4b. It also interacts with serum amyloid P component. The protein is C4b-binding protein alpha chain (C4BPA) of Bos taurus (Bovine).